The following is a 735-amino-acid chain: Protostadienol synthase helA (735 aa).

The PFTB 1 repeat unit spans residues 132 to 173; that stretch reads KQEMCRYLLNVVNEDGGWGLFIQSPSTVFGTVMNYCMLRILG. Catalysis depends on Asp463, which acts as the Proton donor. PFTB repeat units lie at residues 490-531, 567-607, and 616-663; these read LQQA…YENV, LSRS…ACMG, and CQRA…AVIG.

It belongs to the terpene cyclase/mutase family.

It carries out the reaction (S)-2,3-epoxysqualene = (17Z)-protosta-17(20),24-dien-3beta-ol. Its pathway is mycotoxin biosynthesis. Functionally, protostadienol synthase; part of the gene cluster that mediates the biosynthesis of helvolic acid, an antibacterial nortriterpenoid. Protostadienol synthase helA cyclizes (3S)-oxidosqualene to (17Z)-protosta-17(20),24-dien-3-beta-ol (protostadienol). The synthesis of protostadienol is followed by several steps of monooxygenation, dehydrogenation, and acyl transfer to yield the final helvolic acid. Following the cyclization to the tetracyclic protostadienol by helA, cytochrome P450 monooxygenases helB1-mediated and helB2-mediated oxidation at C-4 and C-16, acyltransferase helD2-dependent acetylation of 16-OH, oxidation of C-21 by cytochrome P450 monooxygenase helB4, and short chain dehydrogenase helC-dependent oxidative decarboxylation yield the fusidane skeleton. This intermediate is further modified in three additional steps mediated by the cytochrome P450 monooxygenase helB3, the acyltransferase helD1, and the 3-ketosteroid 1-dehydrogenase helE to give helvolic acid. Compared with the late stages in the biosynthesis of helvolic acid, enzymes involved in the early stage modifications act in a relatively strict order. The hydroxylation of C-16 by helB1 and subsequent acetylation by helD2 should occur before the helB3-mediated oxidation of C-21. C-4 demethylation in fusidane-type antibiotics proceeds in an unusual manner though it is also achieved by oxidative decarboxylation. The methyl group at C-4 beta position is oxidized by helB1 and subsequently removed by the short chain dehydrogenase helC. The sequence is that of Protostadienol synthase helA from Aspergillus fumigatus (strain ATCC MYA-4609 / CBS 101355 / FGSC A1100 / Af293) (Neosartorya fumigata).